The following is a 224-amino-acid chain: Small ribosomal subunit protein uS7 (224 aa).

It belongs to the universal ribosomal protein uS7 family. Part of the 30S ribosomal subunit.

Functionally, one of the primary rRNA binding proteins, it binds directly to 16S rRNA where it nucleates assembly of the head domain of the 30S subunit. Is located at the subunit interface close to the decoding center. The sequence is that of Small ribosomal subunit protein uS7 from Caldivirga maquilingensis (strain ATCC 700844 / DSM 13496 / JCM 10307 / IC-167).